The sequence spans 456 residues: Crinkler effector protein 2 (456 aa).

Positions 1–17 are cleaved as a signal peptide; sequence MVKLVCAIVGVAGSAFP. The tract at residues 18-54 is LQLFLAK domain; that stretch reads VDTDASQLVGDLKKAIKAENAMTFTGDAKDLQLFLAK. The DWL domain stretch occupies residues 55-136; that stretch reads QPVDDESGKE…NMELPSSEQI (82 aa). The HVLVXXP motif signature appears at 137-143; the sequence is HVLVVVP. Residue N338 is glycosylated (N-linked (GlcNAc...) asparagine).

The protein belongs to the Crinkler effector family.

The protein resides in the secreted. It is found in the host nucleus. Its function is as follows. Secreted effector that effector that induces cell death when expressed in host plants. Induces the expression of defense response genes in tomato. The chain is Crinkler effector protein 2 from Phytophthora infestans (Potato late blight agent).